Here is a 199-residue protein sequence, read N- to C-terminus: Cytochrome c oxidase subunit 2 (199 aa).

Residues 1-13 form a helical membrane-spanning segment; sequence AICSLVLYLLSLM. At 14-26 the chain is on the mitochondrial matrix side; the sequence is LMEKLSSNTVDAQ. The helical transmembrane segment at 27–54 threads the bilayer; the sequence is EVELIWTILPAIVLILLALPSLQILYMM. Residues 55 to 199 lie on the Mitochondrial intermembrane side of the membrane; the sequence is DEIDEPDLTL…SSLLSSSSSL (145 aa). Cu cation contacts are provided by histidine 128, cysteine 163, glutamate 165, cysteine 167, histidine 171, and methionine 174. Glutamate 165 is a binding site for Mg(2+).

The protein belongs to the cytochrome c oxidase subunit 2 family. Component of the cytochrome c oxidase (complex IV, CIV), a multisubunit enzyme composed of 14 subunits. The complex is composed of a catalytic core of 3 subunits MT-CO1, MT-CO2 and MT-CO3, encoded in the mitochondrial DNA, and 11 supernumerary subunits COX4I, COX5A, COX5B, COX6A, COX6B, COX6C, COX7A, COX7B, COX7C, COX8 and NDUFA4, which are encoded in the nuclear genome. The complex exists as a monomer or a dimer and forms supercomplexes (SCs) in the inner mitochondrial membrane with NADH-ubiquinone oxidoreductase (complex I, CI) and ubiquinol-cytochrome c oxidoreductase (cytochrome b-c1 complex, complex III, CIII), resulting in different assemblies (supercomplex SCI(1)III(2)IV(1) and megacomplex MCI(2)III(2)IV(2)). Found in a complex with TMEM177, COA6, COX18, COX20, SCO1 and SCO2. Interacts with TMEM177 in a COX20-dependent manner. Interacts with COX20. Interacts with COX16. It depends on Cu cation as a cofactor.

It is found in the mitochondrion inner membrane. The enzyme catalyses 4 Fe(II)-[cytochrome c] + O2 + 8 H(+)(in) = 4 Fe(III)-[cytochrome c] + 2 H2O + 4 H(+)(out). Functionally, component of the cytochrome c oxidase, the last enzyme in the mitochondrial electron transport chain which drives oxidative phosphorylation. The respiratory chain contains 3 multisubunit complexes succinate dehydrogenase (complex II, CII), ubiquinol-cytochrome c oxidoreductase (cytochrome b-c1 complex, complex III, CIII) and cytochrome c oxidase (complex IV, CIV), that cooperate to transfer electrons derived from NADH and succinate to molecular oxygen, creating an electrochemical gradient over the inner membrane that drives transmembrane transport and the ATP synthase. Cytochrome c oxidase is the component of the respiratory chain that catalyzes the reduction of oxygen to water. Electrons originating from reduced cytochrome c in the intermembrane space (IMS) are transferred via the dinuclear copper A center (CU(A)) of subunit 2 and heme A of subunit 1 to the active site in subunit 1, a binuclear center (BNC) formed by heme A3 and copper B (CU(B)). The BNC reduces molecular oxygen to 2 water molecules using 4 electrons from cytochrome c in the IMS and 4 protons from the mitochondrial matrix. The chain is Cytochrome c oxidase subunit 2 (MT-CO2) from Rhea americana (Greater rhea).